We begin with the raw amino-acid sequence, 209 residues long: 3-demethoxyubiquinol 3-hydroxylase (209 aa).

Fe cation contacts are provided by glutamate 58, glutamate 88, histidine 91, glutamate 140, glutamate 172, and histidine 175.

The protein belongs to the COQ7 family. It depends on Fe cation as a cofactor.

The protein resides in the cell membrane. The enzyme catalyses a 5-methoxy-2-methyl-3-(all-trans-polyprenyl)benzene-1,4-diol + AH2 + O2 = a 3-demethylubiquinol + A + H2O. It functions in the pathway cofactor biosynthesis; ubiquinone biosynthesis. In terms of biological role, catalyzes the hydroxylation of 2-nonaprenyl-3-methyl-6-methoxy-1,4-benzoquinol during ubiquinone biosynthesis. The sequence is that of 3-demethoxyubiquinol 3-hydroxylase from Polaromonas naphthalenivorans (strain CJ2).